The following is a 175-amino-acid chain: Ribulose bisphosphate carboxylase small subunit, chloroplastic (175 aa).

The transit peptide at 1–46 (MAPTVMASSATSVAPFQGLKSTAGLPVSRRSNGASLGSVSNGGRIR) directs the protein to the chloroplast.

Belongs to the RuBisCO small chain family. Heterohexadecamer of 8 large and 8 small subunits.

The protein resides in the plastid. The protein localises to the chloroplast. Its function is as follows. RuBisCO catalyzes two reactions: the carboxylation of D-ribulose 1,5-bisphosphate, the primary event in carbon dioxide fixation, as well as the oxidative fragmentation of the pentose substrate. Both reactions occur simultaneously and in competition at the same active site. Although the small subunit is not catalytic it is essential for maximal activity. This is Ribulose bisphosphate carboxylase small subunit, chloroplastic from Aegilops tauschii (Tausch's goatgrass).